We begin with the raw amino-acid sequence, 43 residues long: Protein PsbN (43 aa).

A helical membrane pass occupies residues 5-27 (TLFAISISCLLVSFTGYALYTAF).

Belongs to the PsbN family.

The protein localises to the plastid. The protein resides in the chloroplast thylakoid membrane. Functionally, may play a role in photosystem I and II biogenesis. This is Protein PsbN from Thuja plicata (Western red-cedar).